We begin with the raw amino-acid sequence, 715 residues long: Polyribonucleotide nucleotidyltransferase (715 aa).

Mg(2+)-binding residues include aspartate 495 and aspartate 501. In terms of domain architecture, KH spans 562–621 (PRLLTLQIPPDMIGLVIGPGGKTVRGISEQYNVKVDISEEGLVTITAPNETNAKQARAAI). The S1 motif domain occupies 631-699 (GDVYLGRVTR…SKGRINLTRL (69 aa)).

Belongs to the polyribonucleotide nucleotidyltransferase family. Mg(2+) serves as cofactor.

The protein localises to the cytoplasm. The enzyme catalyses RNA(n+1) + phosphate = RNA(n) + a ribonucleoside 5'-diphosphate. Involved in mRNA degradation. Catalyzes the phosphorolysis of single-stranded polyribonucleotides processively in the 3'- to 5'-direction. The polypeptide is Polyribonucleotide nucleotidyltransferase (Thermosynechococcus vestitus (strain NIES-2133 / IAM M-273 / BP-1)).